The sequence spans 116 residues: T cell receptor alpha variable 38-1 (116 aa).

Residues 1 to 21 (MTRVSLLWAVVVSTCLESGMA) form the signal peptide. In terms of domain architecture, Ig-like spans 22-116 (QTVTQSQPEM…TAMYFCAFMK (95 aa)). Cys-43 and Cys-112 are disulfide-bonded. N-linked (GlcNAc...) asparagine glycosylation is present at Asn-78.

Alpha-beta TR is a heterodimer composed of an alpha and beta chain; disulfide-linked. The alpha-beta TR is associated with the transmembrane signaling CD3 coreceptor proteins to form the TR-CD3 (TcR or TCR). The assembly of alpha-beta TR heterodimers with CD3 occurs in the endoplasmic reticulum where a single alpha-beta TR heterodimer associates with one CD3D-CD3E heterodimer, one CD3G-CD3E heterodimer and one CD247 homodimer forming a stable octameric structure. CD3D-CD3E and CD3G-CD3E heterodimers preferentially associate with TR alpha and TR beta chains, respectively. The association of the CD247 homodimer is the last step of TcR assembly in the endoplasmic reticulum and is required for transport to the cell surface.

The protein resides in the cell membrane. In terms of biological role, v region of the variable domain of T cell receptor (TR) alpha chain that participates in the antigen recognition. Alpha-beta T cell receptors are antigen specific receptors which are essential to the immune response and are present on the cell surface of T lymphocytes. Recognize peptide-major histocompatibility (MH) (pMH) complexes that are displayed by antigen presenting cells (APC), a prerequisite for efficient T cell adaptive immunity against pathogens. Binding of alpha-beta TR to pMH complex initiates TR-CD3 clustering on the cell surface and intracellular activation of LCK that phosphorylates the ITAM motifs of CD3G, CD3D, CD3E and CD247 enabling the recruitment of ZAP70. In turn ZAP70 phosphorylates LAT, which recruits numerous signaling molecules to form the LAT signalosome. The LAT signalosome propagates signal branching to three major signaling pathways, the calcium, the mitogen-activated protein kinase (MAPK) kinase and the nuclear factor NF-kappa-B (NF-kB) pathways, leading to the mobilization of transcription factors that are critical for gene expression and essential for T cell growth and differentiation. The T cell repertoire is generated in the thymus, by V-(D)-J rearrangement. This repertoire is then shaped by intrathymic selection events to generate a peripheral T cell pool of self-MH restricted, non-autoaggressive T cells. Post-thymic interaction of alpha-beta TR with the pMH complexes shapes TR structural and functional avidity. The chain is T cell receptor alpha variable 38-1 from Homo sapiens (Human).